The sequence spans 46 residues: uncharacterized protein (46 aa).

A helical membrane pass occupies residues 20–42; the sequence is MAMIWVVAALVIALVVGTALNYI.

It localises to the membrane. This is an uncharacterized protein from Bacillus subtilis (strain 168).